The following is a 466-amino-acid chain: MSEQKSSNQMWGGRFASGPDAIMEEINASIGFDRKLYAQDIQGSLAHAAMLAKTGIIAAEDHKQIENGLKTIRKEIEEGKFTFSRKLEDIHMNIEARLAELIGPAAGRLHTARSRNDQVAVDFRLWVKQELEKTAAALKNLIEAFLERAEEHAATVMPGFTHLQTAQPVTFGHHCMAYVEMFGRDLSRVRDAIERIDESPLGAAALAGTGFPIDRHMTAKALGFREPTRNSLDSVSDRDYALEFLSLAAICAGHLSRLAEEIVIWSTPQFNFVRLSDAFSTGSSIMPQKKNPDAAELVRAKTGRINGSLVALLTIMKGLPLAYSKDMQEDKEQVFDAAENLELAIAAMAGMVRDLTVNVAAMKKAAGSGYSTATDLADWLVRTLGLPFREAHHVTGRAVALAESRKVDLAKLSLEELQSINPAITAEVFGYLTVEKSVKSRQSFGGTAPQEVRRQIRYWKKRIAKA.

This sequence belongs to the lyase 1 family. Argininosuccinate lyase subfamily.

It is found in the cytoplasm. The enzyme catalyses 2-(N(omega)-L-arginino)succinate = fumarate + L-arginine. It participates in amino-acid biosynthesis; L-arginine biosynthesis; L-arginine from L-ornithine and carbamoyl phosphate: step 3/3. The chain is Argininosuccinate lyase from Brucella abortus (strain S19).